We begin with the raw amino-acid sequence, 311 residues long: Hevamine-A (311 aa).

A signal peptide spans 1–26; sequence MAKRTQAILLLLLAISLIMSSSHVDG. Positions 27–302 constitute a GH18 domain; the sequence is GGIAIYWGQN…SSILDSVLFL (276 aa). 2 disulfides stabilise this stretch: cysteine 46–cysteine 93 and cysteine 76–cysteine 83. Glutamate 153 serves as the catalytic Proton donor. A disulfide bridge links cysteine 185 with cysteine 214. Positions 300–311 are cleaved as a propeptide — removed in mature form; it reads LFLHSEECMTVL.

This sequence belongs to the glycosyl hydrolase 18 family. Chitinase class II subfamily.

It is found in the vacuole. The catalysed reaction is Random endo-hydrolysis of N-acetyl-beta-D-glucosaminide (1-&gt;4)-beta-linkages in chitin and chitodextrins.. The enzyme catalyses Hydrolysis of (1-&gt;4)-beta-linkages between N-acetylmuramic acid and N-acetyl-D-glucosamine residues in a peptidoglycan and between N-acetyl-D-glucosamine residues in chitodextrins.. Functionally, bifunctional enzyme with lysozyme / chitinase activity. May have a role in plugging the latex vessel and cessation of latex flow. This Hevea brasiliensis (Para rubber tree) protein is Hevamine-A.